The following is a 244-amino-acid chain: Krueppel-like factor 9 (244 aa).

The tract at residues Ser80–Arg142 is disordered. Position 122 is a phosphoserine (Ser122). 3 C2H2-type zinc fingers span residues His143–His167, Phe173–His197, and Phe203–His225.

Belongs to the Sp1 C2H2-type zinc-finger protein family. In terms of assembly, interacts with ZZEF1. As to expression, epidermis (at protein level).

The protein resides in the nucleus. Functionally, transcription factor that binds to GC box promoter elements. Selectively activates mRNA synthesis from genes containing tandem repeats of GC boxes but represses genes with a single GC box. Acts as an epidermal circadian transcription factor regulating keratinocyte proliferation. The polypeptide is Krueppel-like factor 9 (KLF9) (Homo sapiens (Human)).